Here is a 162-residue protein sequence, read N- to C-terminus: Ribosome maturation factor RimM (162 aa).

The 75-residue stretch at 86–160 (EGRYYYFALI…GIHVDPIPGL (75 aa)) folds into the PRC barrel domain.

The protein belongs to the RimM family. As to quaternary structure, binds ribosomal protein uS19.

Its subcellular location is the cytoplasm. In terms of biological role, an accessory protein needed during the final step in the assembly of 30S ribosomal subunit, possibly for assembly of the head region. Essential for efficient processing of 16S rRNA. May be needed both before and after RbfA during the maturation of 16S rRNA. It has affinity for free ribosomal 30S subunits but not for 70S ribosomes. The protein is Ribosome maturation factor RimM of Thermus thermophilus (strain ATCC BAA-163 / DSM 7039 / HB27).